A 7182-amino-acid chain; its full sequence is Replicase polyprotein 1ab (7182 aa).

Residues 54–174 enclose the CoV Nsp1 globular domain; it reads YDNHVKIDCR…HKWFQFCRLY (121 aa). Residues 192-222 form the BetaCoV Nsp1 C-terminal domain; sequence FSVEDAYAEVHAEPKGKYSQKAYALLRQYRG. Residues 226–488 enclose the CoV Nsp2 N-terminal domain; it reads VLFVDQYGCD…LITHALYLDY (263 aa). C365, C370, C386, and C389 together coordinate Zn(2+). Residues 365 to 389 form a C4 region; that stretch reads CFNDNCDFYGWVSGNMMDGFSCPLC. Residues 493–681 enclose the CoV Nsp2 middle domain; the sequence is CGNLEQNHIL…VNKFYTFFKL (189 aa). The 113-residue stretch at 697–809 folds into the CoV Nsp2 C-terminal domain; it reads LKTINGLVCI…LDQAWRFPCA (113 aa). Residues 811 to 923 enclose the Ubiquitin-like 1 domain; sequence RKVNFNEKPV…MYCTFAIEDV (113 aa). 14 repeat units span residues 945–954, 955–964, 965–974, 975–984, 985–994, 995–1004, 1005–1014, 1015–1024, 1025–1034, 1035–1044, 1045–1054, 1055–1064, 1065–1074, and 1075–1084. Residues 945 to 1084 are 14 X 10 AA tandem repeat of N-[DN]-D-E-D-V-V-T-G-D; sequence NDDEDVVTGD…NDDEDVVTGD (140 aa). Positions 946–1064 are disordered; that stretch reads DDEDVVTGDN…NDDEDVVTGD (119 aa). The 251-residue stretch at 1123-1373 folds into the Peptidase C16 1 domain; sequence VFNDVYNDAL…VCFVKGDIIN (251 aa). The active-site For PL1-PRO activity is C1161. Zn(2+)-binding residues include C1238, C1241, C1264, and C1266. A C4-type 1 zinc finger spans residues 1238 to 1266; that stretch reads CLKCGFSFDLNGLDALFFYGDIVSHVCKC. Residues H1312 and D1323 each act as for PL1-PRO activity in the active site. The 172-residue stretch at 1351–1522 folds into the Macro domain; it reads ELPQLYGLCI…IIQKCQITSV (172 aa). Residues 1578–1649 form the DPUP domain; the sequence is NDVRDYLLSK…TVNQVCVLLA (72 aa). Positions 1649–1704 constitute a Ubiquitin-like 2 domain; it reads AKKIDVLLTVDGVNFKSISLTVGEVFGKILGNVFCDGIDVTKLKCSDFYADKILYQ. The region spanning 1718–1978 is the Peptidase C16 2 domain; the sequence is SSFGFDQQQL…MVAYNPDLSQ (261 aa). C1757 acts as the For PL2-PRO activity in catalysis. Zn(2+) is bound by residues C1835, C1837, C1869, and C1871. A C4-type 2 zinc finger spans residues 1835–1871; sequence CDCGIKQESRVGVDAVMHFGTLAKTDLFNGYKIGCNC. Residues H1914 and D1928 each act as for PL2-PRO activity in the active site. The 102-residue stretch at 1992–2093 folds into the Nucleic acid-binding domain; it reads IKAQFKPFAK…TYFNKPSFKS (102 aa). One can recognise a G2M domain in the interval 2108–2257; it reads ESQGNVVTSV…NDKTIFYTTE (150 aa). 3 helical membrane passes run 2226 to 2246, 2287 to 2307, and 2318 to 2338; these read AIEF…LLHF, FLVV…NVIF, and FPIF…LVTI. The interval 2226 to 2463 is HD1; that stretch reads AIEFYGFLKW…FVLLRFYIVV (238 aa). The 3Ecto domain occupies 2323–2384; it reads GRIVMWIKAT…AIDFVQYEVD (62 aa). Disulfide bonds link C2339–C2363 and C2354–C2360. 2 helical membrane passes run 2401–2421 and 2443–2463; these read LVIG…LIGL and FIVF…YIVV. Positions 2471–2561 are Y1; the sequence is GFIRHIVYGC…ELKRPVNPTD (91 aa). The CoV Nsp3 Y domain occupies 2471-2838; that stretch reads GFIRHIVYGC…LTTPFSLKGG (368 aa). Zn(2+) contacts are provided by H2475, C2480, C2485, C2488, C2521, H2524, C2528, and C2531. The tract at residues 2475-2488 is ZF1; that stretch reads HIVYGCNKAGCLFC. Residues 2521 to 2531 are ZF2; that stretch reads CVKHQWNCFNC. A Y2 region spans residues 2562-2654; it reads ASHYVVTDIK…LVDKKLITTA (93 aa). Residues 2562–2838 are coV-Y; that stretch reads ASHYVVTDIK…LTTPFSLKGG (277 aa). The segment at 2655 to 2737 is Y3; sequence CNGISVTQTM…KSMISAVAAG (83 aa). The interval 2738-2838 is Y4; sequence LEFTDENYNN…LTTPFSLKGG (101 aa). 5 consecutive transmembrane segments (helical) span residues 2844–2864, 3119–3139, 3151–3171, 3178–3198, and 3203–3223; these read LLYI…ALLP, ASSI…YYLI, VVVI…VFQV, VYAC…SVIM, and IVMY…AMVI. The interval 2844 to 3223 is HD2; it reads LLYILFFVSL…FCVTYVAMVI (380 aa). The Nsp4C domain maps to 3237–3334; that stretch reads IGVNVCSDST…TASVSTSFLQ (98 aa). The Peptidase C30 domain occupies 3335-3637; sequence SGIVKMVSPT…YQQLAGVKLQ (303 aa). Active-site for 3CL-PRO activity residues include H3375 and C3479. 7 consecutive transmembrane segments (helical) span residues 3651 to 3671, 3676 to 3696, 3701 to 3721, 3744 to 3764, 3772 to 3792, 3800 to 3820, and 3843 to 3863; these read ILIS…WTIF, THMI…MLLV, FYLT…NYLV, FTYV…IFIT, IFSL…WYFG, LLFI…SLAI, and LILL…GFFS. Residues 3651–3863 form an HD3 region; that stretch reads ILISTFLFSC…ILSCYWGFFS (213 aa). The 89-residue stretch at 3925–4013 folds into the RdRp Nsp7 cofactor domain; that stretch reads SKLTDVKCAN…DYVQDSTVLQ (89 aa). Residues 4014 to 4210 form the RdRp Nsp8 cofactor domain; it reads ALQSEFVNMA…YNEVANAVMQ (197 aa). In terms of domain architecture, Nsp9 ssRNA-binding spans 4211 to 4320; the sequence is NNELMPHKLK…GTLSSTIRLQ (110 aa). An ExoN/MTase coactivator domain is found at 4321–4458; sequence AGVATEYAAN…CVGSSVAVQS (138 aa). The Zn(2+) site is built by C4394, C4397, H4403, C4410, C4436, C4439, C4447, and C4449. 2 zinc fingers span residues 4394 to 4410 and 4436 to 4449; these read CIYC…DGIC and CQVC…SCSC. Residues 4463 to 4718 enclose the NiRAN domain; sequence FLNRVRGTSV…DCELFVNDSY (256 aa). Residues N4666 and D4675 each coordinate Mn(2+). Positions 4719 to 4817 constitute a Nsp12 Interface domain; sequence RQFDLVQYDF…MNLDVDTHRY (99 aa). Zn(2+) contacts are provided by H4748, C4754, C4759, C4763, and C4940. The Nsp12 RNA-dependent RNA polymerase domain occupies 4818–5385; sequence RLSLKDLLLY…NMYLKSAVMQ (568 aa). The interval 4820 to 5034 is rdRp Fingers N-ter; that stretch reads SLKDLLLYAA…HQKCLKSIAA (215 aa). Positions 5035–5073 are rdRp Palm N-ter; it reads TRGVPVVIGTTKFYGGWDDMLRHLIKDVDNPVLMGWDYP. The RdRp catalytic domain occupies 5065–5227; it reads PVLMGWDYPK…CYNSDYASKG (163 aa). The segment at 5074 to 5132 is rdRp Fingers C-ter; it reads KCDRAMPNILRIVSSLVLARKHEFCCSHGDRFYRLANECAQVLSEIVMCGGCYYVKPGG. Zn(2+) contacts are provided by H5095, C5098, and C5099. Residues 5133–5268 form a rdRp Palm C-ter region; the sequence is TSSGDATTAF…TNGPHEFCSQ (136 aa). Catalysis depends on residues S5212, D5213, and D5214. The tract at residues 5269-5385 is rdRp Thumb; sequence HTMLVKIDGD…NMYLKSAVMQ (117 aa). Positions 5386 to 5498 constitute a CV ZBD domain; the sequence is SVGACVVCSS…DDFNKIASCK (113 aa). Zn(2+)-binding residues include C5390, C5393, C5401, C5404, C5411, C5414, H5418, H5424, C5435, C5440, C5457, and H5460. The region spanning 5641–5822 is the (+)RNA virus helicase ATP-binding domain; the sequence is SVPLVFQNNV…MCCLGPDIFL (182 aa). 5666–5673 lines the ATP pocket; sequence GPPGTGKS. One can recognise a (+)RNA virus helicase C-terminal domain in the interval 5823 to 5992; it reads GNCYRCPKEI…TLPRLHCTTN (170 aa). In terms of domain architecture, ExoN spans 6059 to 6274; the sequence is LFITKDEAIK…RCLAIYDCFC (216 aa). Residues D6077, E6079, and E6178 contribute to the active site. The Zn(2+) site is built by C6194, C6197, C6213, H6216, H6244, C6248, and H6251. Residues H6255 and D6260 contribute to the active site. A Zn(2+)-binding site is contributed by C6266. In terms of domain architecture, N7-MTase spans 6283-6509; sequence YPIISNEVSI…NLWNTFTTLQ (227 aa). Residue 6318 to 6324 coordinates S-adenosyl-L-methionine; the sequence is DIGNPKG. The interval 6396-6410 is gpppA-binding; that stretch reads CNGGSLYVNKHAFHT. The Zn(2+) site is built by C6434, C6455, C6466, and H6469. The Nsp15 N-terminal oligomerization domain maps to 6510–6570; the sequence is SLENVIYNLV…NIAVELFTKR (61 aa). One can recognise an AV-Nsp11N/CoV-Nsp15M domain in the interval 6571 to 6691; it reads SIRHHPELKI…FAMRKDGDDV (121 aa). One can recognise a NendoU domain in the interval 6741-6880; that stretch reads EPRSDLERDF…NDNKIMTFYP (140 aa). Catalysis depends on residues H6771, H6786, K6826, K6929, D7013, K7053, and E7086. Residues 6885 to 7179 form the Nidovirus-type SAM-dependent 2'-O-MTase domain; the sequence is TNDWKPGYSM…KEIFVGDSLV (295 aa).

The protein belongs to the coronaviruses polyprotein 1ab family. In terms of assembly, interacts with host PHB and PHB2. Interacts with papain-like protease nsp3 and non-structural protein 6. As to quaternary structure, monomer. Homodimer. Only the homodimer shows catalytic activity. In terms of assembly, interacts with nsp8 and nsp12 to form the replication-transcription complex (RTC): nsp12, nsp7, two subunits of nsp8, and up to two subunits of nsp13. Interacts with nsp7, nsp13 and nsp12 to form the replication-transcription complex (RTC): nsp12, nsp7, two subunits of nsp8, and up to two subunits of nsp13. As to quaternary structure, interacts with nsp12. In terms of assembly, interacts with proofreading exoribonuclease nsp14 and 2'-O-methyltransferase nsp16; these interactions enhance nsp14 and nsp16 enzymatic activities. Interacts with nsp7 and nsp8 to form the replication-transcription complex (RTC): nsp12, nsp7, two subunits of nsp8, and up to two subunits of nsp13. Interacts with nsp9. As to quaternary structure, interacts with nsp8 to form the replication-transcription complex (RTC): nsp12, nsp7, two subunits of nsp8, and up to two subunits of nsp13. Mn(2+) is required as a cofactor. Mg(2+) serves as cofactor. In terms of processing, specific enzymatic cleavages in vivo by its own proteases yield mature proteins. 3CL-PRO and PL-PRO proteinases are autocatalytically processed.

The protein resides in the host membrane. It localises to the host cytoplasm. It is found in the host perinuclear region. Its subcellular location is the host endoplasmic reticulum-Golgi intermediate compartment. The enzyme catalyses RNA(n) + a ribonucleoside 5'-triphosphate = RNA(n+1) + diphosphate. It catalyses the reaction ATP + H2O = ADP + phosphate + H(+). The catalysed reaction is Thiol-dependent hydrolysis of ester, thioester, amide, peptide and isopeptide bonds formed by the C-terminal Gly of ubiquitin (a 76-residue protein attached to proteins as an intracellular targeting signal).. It carries out the reaction a 5'-end (N(7)-methyl 5'-triphosphoguanosine)-ribonucleoside in mRNA + S-adenosyl-L-methionine = a 5'-end (N(7)-methyl 5'-triphosphoguanosine)-(2'-O-methyl-ribonucleoside) in mRNA + S-adenosyl-L-homocysteine + H(+). The enzyme catalyses uridylyl-uridylyl-ribonucleotide-RNA = a 3'-end uridylyl-2',3'-cyclophospho-uridine-RNA + a 5'-end dephospho-ribonucleoside-RNA. It catalyses the reaction a 5'-end diphospho-ribonucleoside in mRNA + GTP + H(+) = a 5'-end (5'-triphosphoguanosine)-ribonucleoside in mRNA + diphosphate. The catalysed reaction is a 5'-end (5'-triphosphoguanosine)-ribonucleoside in mRNA + S-adenosyl-L-methionine = a 5'-end (N(7)-methyl 5'-triphosphoguanosine)-ribonucleoside in mRNA + S-adenosyl-L-homocysteine. Its function is as follows. The replicase polyprotein of coronaviruses is a multifunctional protein: it contains the activities necessary for the transcription of negative stranded RNA, leader RNA, subgenomic mRNAs and progeny virion RNA as well as proteinases responsible for the cleavage of the polyprotein into functional products. Functionally, inhibits host translation by interacting with the 40S ribosomal subunit. The nsp1-40S ribosome complex further induces an endonucleolytic cleavage near the 5'UTR of host mRNAs, targeting them for degradation. Viral mRNAs are not susceptible to nsp1-mediated endonucleolytic RNA cleavage thanks to the presence of a 5'-end leader sequence and are therefore protected from degradation. By suppressing host gene expression, nsp1 facilitates efficient viral gene expression in infected cells and evasion from host immune response. May play a role in the modulation of host cell survival signaling pathway by interacting with host PHB and PHB2. Indeed, these two proteins play a role in maintaining the functional integrity of the mitochondria and protecting cells from various stresses. In terms of biological role, responsible for the cleavages located at the N-terminus of the replicase polyprotein. In addition, PL-PRO possesses a deubiquitinating/deISGylating activity and processes both 'Lys-48'- and 'Lys-63'-linked polyubiquitin chains from cellular substrates. Participates together with nsp4 in the assembly of virally-induced cytoplasmic double-membrane vesicles necessary for viral replication. Antagonizes innate immune induction of type I interferon by blocking the phosphorylation, dimerization and subsequent nuclear translocation of host IRF3. Also prevents host NF-kappa-B signaling. Its function is as follows. Participates in the assembly of virally-induced cytoplasmic double-membrane vesicles necessary for viral replication. Functionally, cleaves the C-terminus of replicase polyprotein at 11 sites. Recognizes substrates containing the core sequence [ILMVF]-Q-|-[SGACN]. Also able to bind an ADP-ribose-1''-phosphate (ADRP). Plays a role in the initial induction of autophagosomes from host endoplasmic reticulum. Later, limits the expansion of these phagosomes that are no longer able to deliver viral components to lysosomes. In terms of biological role, forms a hexadecamer with nsp8 (8 subunits of each) that may participate in viral replication by acting as a primase. Alternatively, may synthesize substantially longer products than oligonucleotide primers. Its function is as follows. Forms a hexadecamer with nsp7 (8 subunits of each) that may participate in viral replication by acting as a primase. Alternatively, may synthesize substantially longer products than oligonucleotide primers. Functionally, forms a primer, NSP9-pU, which is utilized by the polymerase for the initiation of RNA chains. Interacts with ribosome signal recognition particle RNA (SRP). Together with NSP8, suppress protein integration into the cell membrane, thereby disrupting host immune defenses. Plays a pivotal role in viral transcription by stimulating both nsp14 3'-5' exoribonuclease and nsp16 2'-O-methyltransferase activities. Therefore plays an essential role in viral mRNAs cap methylation. In terms of biological role, RNA-directed RNA polymerase that catalyzes the transcription of viral genomic and subgenomic RNAs. Acts in complex with nsp7 and nsp8 to transcribe both the minus and positive strands of genomic RNA. The kinase-like NiRAN domain of NSP12 attaches one or more nucleotides to the amino terminus of NSP9, forming a covalent RNA-protein intermediate that serves as transcription/replication primer. Subgenomic RNAs (sgRNAs) are formed by discontinuous transcription: The polymerase has the ability to pause at transcription-regulating sequences (TRS) and jump to the leader TRS, resulting in a major deletion. This creates a series of subgenomic RNAs that are replicated, transcribed and translated. In addition, Nsp12 is a subunit of the viral RNA capping enzyme that catalyzes the RNA guanylyltransferase reaction for genomic and sub-genomic RNAs. Subsequently, the NiRAN domain transfers RNA to GDP, and forms the core cap structure GpppA-RNA. Its function is as follows. Multi-functional protein with a zinc-binding domain in N-terminus displaying RNA and DNA duplex-unwinding activities with 5' to 3' polarity. Activity of helicase is dependent on magnesium. Functionally, plays a role in viral RNA synthesis through two distinct activities. The N7-guanine methyltransferase activity plays a role in the formation of the cap structure GpppA-RNA. The proofreading exoribonuclease reduces the sensitivity of the virus to RNA mutagens during replication. This activity acts on both ssRNA and dsRNA in a 3'-5' direction. Plays a role in viral transcription/replication and prevents the simultaneous activation of host cell dsRNA sensors, such as MDA5/IFIH1, OAS, and PKR. Acts by degrading the 5'-polyuridines generated during replication of the poly(A) region of viral genomic and subgenomic RNAs. Catalyzes a two-step reaction in which a 2'3'-cyclic phosphate (2'3'-cP) is first generated by 2'-O transesterification, which is then hydrolyzed to a 3'-phosphate (3'-P). If not degraded, poly(U) RNA would hybridize with poly(A) RNA tails and activate host dsRNA sensors. In terms of biological role, methyltransferase that mediates mRNA cap 2'-O-ribose methylation to the 5'-cap structure of viral mRNAs. N7-methyl guanosine cap is a prerequisite for binding of nsp16. Therefore plays an essential role in viral mRNAs cap methylation which is essential to evade immune system. The protein is Replicase polyprotein 1ab (rep) of Human coronavirus HKU1 (isolate N1) (HCoV-HKU1).